Consider the following 319-residue polypeptide: tRNA pseudouridine synthase B (319 aa).

The Nucleophile role is filled by aspartate 47.

It belongs to the pseudouridine synthase TruB family. Type 1 subfamily.

The catalysed reaction is uridine(55) in tRNA = pseudouridine(55) in tRNA. In terms of biological role, responsible for synthesis of pseudouridine from uracil-55 in the psi GC loop of transfer RNAs. The sequence is that of tRNA pseudouridine synthase B from Pseudoalteromonas translucida (strain TAC 125).